The primary structure comprises 65 residues: MKEKTHPKYEQTTITCVCGEVIPTGSTKKDIKVEICSKCHPFYTGVQRFVDAGGRVDRFKKKYGM.

Positions 16, 18, 36, and 39 each coordinate Zn(2+).

It belongs to the bacterial ribosomal protein bL31 family. Type A subfamily. As to quaternary structure, part of the 50S ribosomal subunit. Zn(2+) is required as a cofactor.

Its function is as follows. Binds the 23S rRNA. The chain is Large ribosomal subunit protein bL31 from Desulfitobacterium hafniense (strain DSM 10664 / DCB-2).